A 320-amino-acid chain; its full sequence is Methenyltetrahydromethanopterin cyclohydrolase (320 aa).

The protein belongs to the MCH family.

Its subcellular location is the cytoplasm. It carries out the reaction 5,10-methenyl-5,6,7,8-tetrahydromethanopterin + H2O = N(5)-formyl-5,6,7,8-tetrahydromethanopterin + H(+). Functionally, catalyzes the hydrolysis of methenyl-H(4)MPT(+) to 5-formyl-H(4)MPT. The chain is Methenyltetrahydromethanopterin cyclohydrolase from Methanococcoides burtonii (strain DSM 6242 / NBRC 107633 / OCM 468 / ACE-M).